Reading from the N-terminus, the 50-residue chain is Insulin-1 (50 aa).

3 disulfides stabilise this stretch: Cys7-Cys36, Cys19-Cys49, and Cys35-Cys40.

This sequence belongs to the insulin family. As to quaternary structure, heterodimer of a B chain and an A chain linked by two disulfide bonds.

It localises to the secreted. Insulin decreases blood glucose concentration. It increases cell permeability to monosaccharides, amino acids and fatty acids. It accelerates glycolysis, the pentose phosphate cycle, and glycogen synthesis in liver. This Thunnus orientalis (North Pacific bluefin tuna) protein is Insulin-1.